A 371-amino-acid polypeptide reads, in one-letter code: tRNA-specific 2-thiouridylase MnmA (371 aa).

Residues 22-29 (GLSGGVDS) and methionine 48 each bind ATP. The segment at 108–110 (NPD) is interaction with target base in tRNA. Residue cysteine 113 is the Nucleophile of the active site. The cysteines at positions 113 and 209 are disulfide-linked. Position 137 (glycine 137) interacts with ATP. An interaction with tRNA region spans residues 159–161 (KDQ). Catalysis depends on cysteine 209, which acts as the Cysteine persulfide intermediate.

This sequence belongs to the MnmA/TRMU family.

It is found in the cytoplasm. The enzyme catalyses S-sulfanyl-L-cysteinyl-[protein] + uridine(34) in tRNA + AH2 + ATP = 2-thiouridine(34) in tRNA + L-cysteinyl-[protein] + A + AMP + diphosphate + H(+). In terms of biological role, catalyzes the 2-thiolation of uridine at the wobble position (U34) of tRNA, leading to the formation of s(2)U34. This is tRNA-specific 2-thiouridylase MnmA from Coxiella burnetii (strain CbuK_Q154) (Coxiella burnetii (strain Q154)).